The primary structure comprises 550 residues: MADKLFINALKKKFEESPEEKKTTFYTLGGWKQSERKTEFVNAGKEVAAKRGIPQYNPDIGTPLGQRVLMPYQVSTTDTYVEGDDLHFVNNAAMQQMWDDIRRTVIVGLNHAHAVIEKRLGKEVTPETITHYLETVNHAMPGAAVVQEHMVETHPALVADSYVKVFTGNDEIADEIDPAFVIDINKQFPEDQAETLKAEVGDGIWQVVRIPTIVSRTCDGATTSRWSAMQIGMSMISAYKQAAGEAATGDFAYAAKHAEVIHMGTYLPVRRARGENEPGGVPFGYLADICQSSRVNYEDPVRVSLDVVATGAMLYDQIWLGSYMSGGVGFTQYATAAYTDNILDDFTYFGKEYVEDKYGLCEAPNNMDTVLDVATEVTFYGLEQYEEYPALLEDQFGGSQRAAVVAAAAGCSTAFATGNAQTGLSGWYLSMYLHKEQHSRLGFYGYDLQDQCGASNVFSIRGDEGLPLELRGPNYPNYAMNVGHQGEYAGISQAPHAARGDAFVFNPLVKIAFADDNLVFDFTNVRGEFAKGALREFEPAGERALITPAK.

Coenzyme F430 is bound at residue glutamine 147. Residues arginine 225, 256–257 (KH), and arginine 270 each bind coenzyme B. Position 257 is a pros-methylhistidine (histidine 257). The residue at position 271 (arginine 271) is a 5-methylarginine. Tyrosine 333 is a binding site for coenzyme M. Position 400 is a 2-methylglutamine (glutamine 400). Tyrosine 444 provides a ligand contact to coenzyme M. Glycine 445 is modified (1-thioglycine). Residue aspartate 450 is modified to (Z)-2,3-didehydroaspartate. Residue cysteine 452 is modified to S-methylcysteine.

Belongs to the methyl-coenzyme M reductase alpha subunit family. In terms of assembly, MCR is a hexamer of two alpha, two beta, and two gamma chains, forming a dimer of heterotrimers. Coenzyme F430 is required as a cofactor. The alpha subunit contains six modified amino acids near the active site region. Is methylated on His-257, Arg-271, Gln-400 and Cys-452, probably by the action of specific S-adenosylmethionine-dependent methyltransferases. Also contains a thioglycine at position 445, forming a thiopeptide bond. Contains a didehydroaspartate residue at position 450. The methylation on C5 of Arg-271 is a post-translational methylation not essential in vivo, but which plays a role for the stability and structural integrity of MCR.

It is found in the cytoplasm. It catalyses the reaction coenzyme B + methyl-coenzyme M = methane + coenzyme M-coenzyme B heterodisulfide. It participates in one-carbon metabolism; methyl-coenzyme M reduction; methane from methyl-coenzyme M: step 1/1. Its activity is regulated as follows. Methyl-coenzyme M reductase activity is inhibited by 3-nitrooxypropanol (3-NOP) in vitro and in vivo, by oxidation of its active site Ni(I), which stops both growth and methanogenesis. Is also inhibited by the reaction product CoM-S-S-CoB. Functionally, component of the methyl-coenzyme M reductase (MCR) I that catalyzes the reductive cleavage of methyl-coenzyme M (CoM-S-CH3 or 2-(methylthio)ethanesulfonate) using coenzyme B (CoB or 7-mercaptoheptanoylthreonine phosphate) as reductant which results in the production of methane and the mixed heterodisulfide of CoB and CoM (CoM-S-S-CoB). This is the final step in methanogenesis. Neither N-6-mercaptohexanoylthreonine phosphate (H-S-HxoTP) nor N-8-mercaptooctanoylthreonine phosphate (H-SOcoTP) nor any other thiol compound such as CoA or CoM can substitute for CoB as the electron donor. In Methanothermobacter marburgensis (strain ATCC BAA-927 / DSM 2133 / JCM 14651 / NBRC 100331 / OCM 82 / Marburg) (Methanobacterium thermoautotrophicum), this protein is Methyl-coenzyme M reductase I subunit alpha (mcrA).